A 72-amino-acid polypeptide reads, in one-letter code: MARVTVEDCLDKVETRFDLVVLASMRANKILKNGYSESMENEKKEKATVVALREIAESEITPEQILRNEIEG.

It belongs to the RNA polymerase subunit omega family. In terms of assembly, the RNAP catalytic core consists of 2 alpha, 1 beta, 1 beta' and 1 omega subunit. When a sigma factor is associated with the core the holoenzyme is formed, which can initiate transcription.

It carries out the reaction RNA(n) + a ribonucleoside 5'-triphosphate = RNA(n+1) + diphosphate. Its function is as follows. Promotes RNA polymerase assembly. Latches the N- and C-terminal regions of the beta' subunit thereby facilitating its interaction with the beta and alpha subunits. The chain is DNA-directed RNA polymerase subunit omega from Francisella tularensis subsp. tularensis (strain FSC 198).